The primary structure comprises 1185 residues: Chromosome partition protein Smc (1185 aa).

34 to 41 contacts ATP; that stretch reads PNGSGKSN. 2 coiled-coil regions span residues 174–376 and 412–526; these read WRRS…EKDI and ENIV…KLDV. The region spanning 534–644 is the SMC hinge domain; sequence VGEIISLQKK…CENIDNAFEI (111 aa). The stretch at 679 to 1039 forms a coiled coil; the sequence is NIIGRKREIE…IDAMTEKMKG (361 aa).

The protein belongs to the SMC family. In terms of assembly, homodimer.

The protein localises to the cytoplasm. Required for chromosome condensation and partitioning. The protein is Chromosome partition protein Smc of Clostridium kluyveri (strain NBRC 12016).